The sequence spans 465 residues: MSEAVPTSARKSKNAPVAPGPAPVLEIESLDMEARGVGRTVTEDGTPGKVIFVEGALPGERVTYSSYRRKPSYEQATVVDILRPSVLRTQPKCAFFGTCGGCSMQHLDMRAQVAIKQRVLEDNLWHLAKLRAETVFAPIHGPSWGYRYRARLTVRNVAKKGGVLVGFHEKKSSYVADMTSCEVLPPHVSAMLVPLRRLVEGLSIRDRMPQIELAVGSQVTALVLRVLEPINADDEALLRAFADEHKVQFWLQPKGPDTVTPFYPLDVPLDYTLPEFGIRMPFKPTDFTQVNHQINRVLVGRALRLLAPSRDDRVLDLFCGIGNFTLPLARLSREVMGIEGSDTLTTRALANARENGVDGHTTFACRNLFEVTGDDLRALGAFDKFLIDPPREGALAVSKALAEIAQSGEGPLPKRIVYVSCNPSTLARDAGLLVHEAGYRLKGAGVVNMFPNTSHVESIALFERG.

The disordered stretch occupies residues 1-22 (MSEAVPTSARKSKNAPVAPGPA). The TRAM domain occupies 16 to 80 (PVAPGPAPVL…PSYEQATVVD (65 aa)). Residues cysteine 93, cysteine 99, cysteine 102, and cysteine 181 each contribute to the [4Fe-4S] cluster site. 6 residues coordinate S-adenosyl-L-methionine: glutamine 289, phenylalanine 318, asparagine 323, glutamate 339, asparagine 367, and aspartate 388. The active-site Nucleophile is the cysteine 421.

This sequence belongs to the class I-like SAM-binding methyltransferase superfamily. RNA M5U methyltransferase family. RlmD subfamily.

The enzyme catalyses uridine(1939) in 23S rRNA + S-adenosyl-L-methionine = 5-methyluridine(1939) in 23S rRNA + S-adenosyl-L-homocysteine + H(+). Functionally, catalyzes the formation of 5-methyl-uridine at position 1939 (m5U1939) in 23S rRNA. The polypeptide is 23S rRNA (uracil(1939)-C(5))-methyltransferase RlmD (Burkholderia ambifaria (strain ATCC BAA-244 / DSM 16087 / CCUG 44356 / LMG 19182 / AMMD) (Burkholderia cepacia (strain AMMD))).